The following is a 1363-amino-acid chain: DNA-directed RNA polymerase subunit beta (1363 aa).

The protein belongs to the RNA polymerase beta chain family. In terms of assembly, the RNAP catalytic core consists of 2 alpha, 1 beta, 1 beta' and 1 omega subunit. When a sigma factor is associated with the core the holoenzyme is formed, which can initiate transcription.

The catalysed reaction is RNA(n) + a ribonucleoside 5'-triphosphate = RNA(n+1) + diphosphate. Functionally, DNA-dependent RNA polymerase catalyzes the transcription of DNA into RNA using the four ribonucleoside triphosphates as substrates. The sequence is that of DNA-directed RNA polymerase subunit beta from Neorickettsia risticii (Ehrlichia risticii).